Here is a 366-residue protein sequence, read N- to C-terminus: Adenosine deaminase (366 aa).

2 residues coordinate Zn(2+): His19 and His21. His21, Asp23, and Gly181 together coordinate substrate. His208 lines the Zn(2+) pocket. Glu211 serves as the catalytic Proton donor. Asp304 serves as a coordination point for Zn(2+).

Belongs to the metallo-dependent hydrolases superfamily. Adenosine and AMP deaminases family. Adenosine deaminase subfamily. Requires Zn(2+) as cofactor.

It catalyses the reaction adenosine + H2O + H(+) = inosine + NH4(+). The catalysed reaction is 2'-deoxyadenosine + H2O + H(+) = 2'-deoxyinosine + NH4(+). In terms of biological role, catalyzes the hydrolytic deamination of adenosine and 2-deoxyadenosine. In Mycobacterium avium (strain 104), this protein is Adenosine deaminase.